A 165-amino-acid polypeptide reads, in one-letter code: Phosphopantetheine adenylyltransferase (165 aa).

Substrate is bound at residue Ser-9. ATP is bound by residues 9 to 10 (SF) and His-17. Substrate is bound by residues Lys-41, Leu-73, and Lys-87. ATP contacts are provided by residues 88–90 (GLR), Glu-98, and 122–128 (YSFLSSS).

It belongs to the bacterial CoaD family. In terms of assembly, homohexamer. Mg(2+) is required as a cofactor.

It is found in the cytoplasm. The enzyme catalyses (R)-4'-phosphopantetheine + ATP + H(+) = 3'-dephospho-CoA + diphosphate. It participates in cofactor biosynthesis; coenzyme A biosynthesis; CoA from (R)-pantothenate: step 4/5. Reversibly transfers an adenylyl group from ATP to 4'-phosphopantetheine, yielding dephospho-CoA (dPCoA) and pyrophosphate. The polypeptide is Phosphopantetheine adenylyltransferase (Acidothermus cellulolyticus (strain ATCC 43068 / DSM 8971 / 11B)).